The sequence spans 381 residues: UDP-4-amino-4-deoxy-L-arabinose--oxoglutarate aminotransferase (381 aa).

Lys182 bears the N6-(pyridoxal phosphate)lysine mark.

It belongs to the DegT/DnrJ/EryC1 family. ArnB subfamily. Homodimer. Pyridoxal 5'-phosphate is required as a cofactor.

It carries out the reaction UDP-4-amino-4-deoxy-beta-L-arabinose + 2-oxoglutarate = UDP-beta-L-threo-pentopyranos-4-ulose + L-glutamate. The protein operates within nucleotide-sugar biosynthesis; UDP-4-deoxy-4-formamido-beta-L-arabinose biosynthesis; UDP-4-deoxy-4-formamido-beta-L-arabinose from UDP-alpha-D-glucuronate: step 2/3. Its pathway is bacterial outer membrane biogenesis; lipopolysaccharide biosynthesis. Catalyzes the conversion of UDP-4-keto-arabinose (UDP-Ara4O) to UDP-4-amino-4-deoxy-L-arabinose (UDP-L-Ara4N). The modified arabinose is attached to lipid A and is required for resistance to polymyxin and cationic antimicrobial peptides. In Edwardsiella ictaluri (strain 93-146), this protein is UDP-4-amino-4-deoxy-L-arabinose--oxoglutarate aminotransferase.